The sequence spans 459 residues: Serine/threonine-protein kinase 12 (459 aa).

The tract at residues Met1–Ser30 is disordered. ANK repeat units follow at residues Asp42–Tyr71, Asp75–Pro104, and Trp108–Met137. One can recognise a Protein kinase domain in the interval Val102–Leu417. ATP is bound by residues Trp108–Ala116 and Lys184. Asp281 functions as the Proton acceptor in the catalytic mechanism.

This sequence belongs to the protein kinase superfamily. Ser/Thr protein kinase family. In terms of assembly, interacts with BLUS1, PHOT1 and PHOT2. Accumulates in leaves, stems, petioles and roots, especially in guard cells.

The protein resides in the cytoplasm. Its subcellular location is the cytosol. It catalyses the reaction L-seryl-[protein] + ATP = O-phospho-L-seryl-[protein] + ADP + H(+). The catalysed reaction is L-threonyl-[protein] + ATP = O-phospho-L-threonyl-[protein] + ADP + H(+). In terms of biological role, serine/threonine protein kinase that phosphorylates proteins on serine and threonine residues. Mediates blue light-dependent stomatal opening in guard cells by promoting plasma membrane-type ATPases (AHA1 and AHA2) phosphorylation. The chain is Serine/threonine-protein kinase 12 from Arabidopsis thaliana (Mouse-ear cress).